Here is a 229-residue protein sequence, read N- to C-terminus: Prolactin (229 aa).

Positions Met-1–Ser-30 are cleaved as a signal peptide. An intrachain disulfide couples Cys-34 to Cys-41. At Ser-56 the chain carries Phosphoserine. The N-linked (GlcNAc...) asparagine; partial glycan is linked to Asn-61. Residues Ser-64 and Ser-120 each carry the phosphoserine modification. 2 disulfides stabilise this stretch: Cys-88–Cys-204 and Cys-221–Cys-229.

Belongs to the somatotropin/prolactin family. As to quaternary structure, interacts with PRLR.

The protein resides in the secreted. Functionally, prolactin acts primarily on the mammary gland by promoting lactation. This chain is Prolactin (PRL), found in Equus caballus (Horse).